An 80-amino-acid polypeptide reads, in one-letter code: Cell division protein ZapB (80 aa).

The stretch at 3 to 80 (FEVLEQLESK…ALLGKMDEVE (78 aa)) forms a coiled coil. The span at 41–53 (ANELRSQREELEQ) shows a compositional bias: basic and acidic residues. Residues 41-60 (ANELRSQREELEQKSQQAQQ) form a disordered region.

It belongs to the ZapB family. In terms of assembly, homodimer. The ends of the coiled-coil dimer bind to each other, forming polymers. Interacts with FtsZ.

The protein localises to the cytoplasm. Its function is as follows. Non-essential, abundant cell division factor that is required for proper Z-ring formation. It is recruited early to the divisome by direct interaction with FtsZ, stimulating Z-ring assembly and thereby promoting cell division earlier in the cell cycle. Its recruitment to the Z-ring requires functional FtsA or ZipA. This is Cell division protein ZapB from Vibrio campbellii (strain ATCC BAA-1116).